We begin with the raw amino-acid sequence, 366 residues long: MSGNTLGTLFTVTTFGESHGPAIGCVIDGCPPGMALTEADIQAELDRRKPGTSRHVTQRQEADEVEILSGVFEGVTTGTPIALLIRNTDQRSKDYGNIVETFRPGHADYTYWQKYGVRDYRGGGRSSARLTAPIVGAGAVAKKWLRERFGVEVRGYMSALGEIDVPFVDWSHVRENPFFAPNAAIVPELEAYMDALRKDGDSIGARIDVVASGVPVGWGEPVFDRLDADIAKAMMSINAVKGVEIGAGFDSVAQRGSVHGDELTPAGFVGNHAGGVLGGISTGQDITVSIAIKPTSSIRTPRRSITKDGQPATVETFGRHDPCVGIRATPIAESMLALVLIDHALRHRAQCGDVETQTPKIAGSAT.

Positions 48 and 54 each coordinate NADP(+). Residues Arg-125 to Ser-127, Asn-238 to Ala-239, Gly-278, Lys-293 to Ser-297, and Arg-319 contribute to the FMN site.

This sequence belongs to the chorismate synthase family. As to quaternary structure, homotetramer. Requires FMNH2 as cofactor.

It catalyses the reaction 5-O-(1-carboxyvinyl)-3-phosphoshikimate = chorismate + phosphate. The protein operates within metabolic intermediate biosynthesis; chorismate biosynthesis; chorismate from D-erythrose 4-phosphate and phosphoenolpyruvate: step 7/7. Functionally, catalyzes the anti-1,4-elimination of the C-3 phosphate and the C-6 proR hydrogen from 5-enolpyruvylshikimate-3-phosphate (EPSP) to yield chorismate, which is the branch point compound that serves as the starting substrate for the three terminal pathways of aromatic amino acid biosynthesis. This reaction introduces a second double bond into the aromatic ring system. This Burkholderia multivorans (strain ATCC 17616 / 249) protein is Chorismate synthase.